Consider the following 254-residue polypeptide: Glutamate racemase (254 aa).

Substrate contacts are provided by residues 7-8 (DS) and 39-40 (YG). Residue cysteine 70 is the Proton donor/acceptor of the active site. Substrate is bound at residue 71 to 72 (NT). Cysteine 178 serves as the catalytic Proton donor/acceptor. Substrate is bound at residue 179 to 180 (TH).

The protein belongs to the aspartate/glutamate racemases family.

The enzyme catalyses L-glutamate = D-glutamate. Its pathway is cell wall biogenesis; peptidoglycan biosynthesis. Provides the (R)-glutamate required for cell wall biosynthesis. The polypeptide is Glutamate racemase (Aquifex aeolicus (strain VF5)).